The sequence spans 1874 residues: Protein TIC 214 (1874 aa).

The next 6 membrane-spanning stretches (helical) occupy residues 18–38 (IINS…FSIG), 64–84 (FITG…HLAL), 87–107 (PHTI…WNNH), 124–144 (LSIQ…YFIL), 172–192 (VGWL…LVWI), and 221–241 (IFSI…PSPI). Disordered stretches follow at residues 248 to 310 (ETSK…EIRV) and 1567 to 1624 (KTEC…NEED). Acidic residues predominate over residues 255–268 (GVESEEEGDVEIET). 2 stretches are compositionally biased toward basic and acidic residues: residues 298 to 310 (DSNK…EIRV) and 1584 to 1601 (NQKE…RSDA).

The protein belongs to the TIC214 family. As to quaternary structure, part of the Tic complex.

Its subcellular location is the plastid. It is found in the chloroplast inner membrane. In terms of biological role, involved in protein precursor import into chloroplasts. May be part of an intermediate translocation complex acting as a protein-conducting channel at the inner envelope. In Coffea arabica (Arabian coffee), this protein is Protein TIC 214.